Here is a 199-residue protein sequence, read N- to C-terminus: Photosystem I reaction center subunit XI (199 aa).

Helical transmembrane passes span V108–L128 and F165–L185.

It belongs to the PsaL family.

It localises to the cellular thylakoid membrane. This Prochlorococcus marinus (strain MIT 9215) protein is Photosystem I reaction center subunit XI.